An 89-amino-acid chain; its full sequence is Probable monothiol glutaredoxin GrlA (89 aa).

Residues 1-89 enclose the Glutaredoxin domain; it reads MLYMKGTPKM…EPMLRDAVAA (89 aa). Position 5 (Lys5) interacts with glutathione. Residue Cys13 coordinates [2Fe-2S] cluster. Residues Arg42, Phe54, and 67 to 68 each bind glutathione; that span reads SD.

The protein belongs to the glutaredoxin family. Monothiol subfamily.

This Legionella pneumophila subsp. pneumophila (strain Philadelphia 1 / ATCC 33152 / DSM 7513) protein is Probable monothiol glutaredoxin GrlA (grlA).